Reading from the N-terminus, the 298-residue chain is Golgi to ER traffic protein 2 (298 aa).

Over 1-164 (MSEPVVDTAE…LEYNTYNQKL (164 aa)) the chain is Cytoplasmic. Positions 40–92 (ILSQGSSVKTSGVKSVLDQEKEATPSHDEDPEIQDITEITTPPPRTPPIGEDA) are disordered. Residues 42 to 55 (SQGSSVKTSGVKSV) are compositionally biased toward low complexity. Residues 56–67 (LDQEKEATPSHD) show a composition bias toward basic and acidic residues. Residues 165–185 (WKFRFLLVRVSVTLFNFFYHY) form a helical membrane-spanning segment. The Lumenal portion of the chain corresponds to 186–211 (INLSNFHASNYAYVRDLSSEKYPVRD). The helical transmembrane segment at 212 to 231 (FFTWFATTEVVLVAAYYSIF) threads the bilayer. Over 232–275 (HSLGLFHAANQNSFVLKAMSMGSMVLPQLEHYKPLVARFLGYYE) the chain is Cytoplasmic. A helical membrane pass occupies residues 276-296 (LLGIVLGDLSLVIVLFGLLSF). The Lumenal portion of the chain corresponds to 297–298 (AN).

This sequence belongs to the GET2 family. Component of the Golgi to ER traffic (GET) complex, which is composed of GET1, GET2 and GET3. Within the complex, GET1 and GET2 form a heterotetramer which is stabilized by phosphatidylinositol binding and which binds to the GET3 homodimer.

It localises to the endoplasmic reticulum membrane. It is found in the golgi apparatus membrane. Required for the post-translational delivery of tail-anchored (TA) proteins to the endoplasmic reticulum. Together with GET1, acts as a membrane receptor for soluble GET3, which recognizes and selectively binds the transmembrane domain of TA proteins in the cytosol. The GET complex cooperates with the HDEL receptor ERD2 to mediate the ATP-dependent retrieval of resident ER proteins that contain a C-terminal H-D-E-L retention signal from the Golgi to the ER. This chain is Golgi to ER traffic protein 2, found in Candida albicans (strain SC5314 / ATCC MYA-2876) (Yeast).